Consider the following 263-residue polypeptide: Endonuclease 8 (263 aa).

Residue Pro-2 is the Schiff-base intermediate with DNA of the active site. Residue Glu-3 is the Proton donor of the active site. The Proton donor; for beta-elimination activity role is filled by Lys-53. The DNA site is built by Gln-70, Arg-125, and Asn-169. The FPG-type zinc finger occupies 229–263 (KVFHRDGELCERCGGIIEKTTLSSRPFYWCPGCQH). Arg-253 (proton donor; for delta-elimination activity) is an active-site residue.

Belongs to the FPG family. Zn(2+) is required as a cofactor.

The catalysed reaction is 2'-deoxyribonucleotide-(2'-deoxyribose 5'-phosphate)-2'-deoxyribonucleotide-DNA = a 3'-end 2'-deoxyribonucleotide-(2,3-dehydro-2,3-deoxyribose 5'-phosphate)-DNA + a 5'-end 5'-phospho-2'-deoxyribonucleoside-DNA + H(+). Involved in base excision repair of DNA damaged by oxidation or by mutagenic agents. Acts as a DNA glycosylase that recognizes and removes damaged bases. Has a preference for oxidized pyrimidines, such as thymine glycol, 5,6-dihydrouracil and 5,6-dihydrothymine. Has AP (apurinic/apyrimidinic) lyase activity and introduces nicks in the DNA strand. Cleaves the DNA backbone by beta-delta elimination to generate a single-strand break at the site of the removed base with both 3'- and 5'-phosphates. In Shigella dysenteriae serotype 1 (strain Sd197), this protein is Endonuclease 8.